The primary structure comprises 111 residues: MELSLDELKLCLKPLVFFGELKLEISDYEEGKKIEVLDHDEGSLINLADQTINENYVCTTCNCTLYTNENNEVCFIEHPYGAITAVNKDQVIHLTKLIGAIINTDEEDPVE.

This chain is SPbeta prophage-derived uncharacterized protein YopW (yopW), found in Bacillus subtilis (strain 168).